An 80-amino-acid chain; its full sequence is Small ribosomal subunit protein bS18 (80 aa).

The protein belongs to the bacterial ribosomal protein bS18 family. Part of the 30S ribosomal subunit. Forms a tight heterodimer with protein bS6.

Its function is as follows. Binds as a heterodimer with protein bS6 to the central domain of the 16S rRNA, where it helps stabilize the platform of the 30S subunit. In Clostridium botulinum (strain 657 / Type Ba4), this protein is Small ribosomal subunit protein bS18.